The chain runs to 232 residues: Protein TIFY 10c (232 aa).

A disordered region spans residues 54–73 (PPAAGAGGAFRPPPTTMNLL). The Tify domain occupies 114–149 (AGEKAQQLTIFYGGKVVVFENFPSTKVKDLLQIVST). Residues 151 to 176 (DGVDKNTGTAATQSLPRPAHNSLPDL) are disordered. Over residues 156–165 (NTGTAATQSL) the composition is skewed to polar residues. A Jas motif is present at residues 177–202 (PIARRNSLHRFLEKRKGRMNANAPYQ). The short motif at 179 to 186 (ARRNSLHR) is the Nuclear localization signal element.

The protein belongs to the TIFY/JAZ family. Interacts with BHLH148. Interacts with COI1B in a coronatine-dependent manner. Coronatine is an analog of jasmonoyl isoleucine (JA-Ile). Interacts with TIFY5/JAZ2, TIFY6B/JAZ4, TIFY9/JAZ5, TIFY11A, TIFY11D/JAZ12 and TIFY11G/JAZ15. Ubiquitinated. Increase in jasmonoyl isoleucine (JA-Ile) levels mediates its degradation via COI1B-mediated proteasome pathway.

The protein resides in the nucleus. Its subcellular location is the cytoplasm. The protein localises to the cytosol. Functionally, repressor of jasmonate (JA) responses. Acts as a repressor of JA-induced resistance to the bacterial blight pathogen Xanthomonas oryzae pv. oryzae (Xoo). Regulates JA-induced accumulation of linalool at the transcriptional level of linalool synthase gene LIS. Linalool is important for resistance to bacterial blight pathogen Xoo. The protein is Protein TIFY 10c of Oryza sativa subsp. indica (Rice).